Reading from the N-terminus, the 258-residue chain is ATP synthase subunit a (258 aa).

The next 5 membrane-spanning stretches (helical) occupy residues 38-58 (KPVWFLWLGAAITFLFMYVGA), 94-114 (WFPYSLTLFIFLLVLNIIGLF), 118-138 (YPVTSNISFTATLALFTFVLT), 193-213 (ILAGHLIIFVFLSLILYFGLP), and 215-235 (AFVSVPFAVVFYAFEIFVAVI).

It belongs to the ATPase A chain family. F-type ATPases have 2 components, CF(1) - the catalytic core - and CF(0) - the membrane proton channel. CF(1) has five subunits: alpha(3), beta(3), gamma(1), delta(1), epsilon(1). CF(0) has three main subunits: a(1), b(2) and c(9-12). The alpha and beta chains form an alternating ring which encloses part of the gamma chain. CF(1) is attached to CF(0) by a central stalk formed by the gamma and epsilon chains, while a peripheral stalk is formed by the delta and b chains.

It localises to the cell membrane. Its function is as follows. Key component of the proton channel; it plays a direct role in the translocation of protons across the membrane. The chain is ATP synthase subunit a from Rubrobacter xylanophilus (strain DSM 9941 / JCM 11954 / NBRC 16129 / PRD-1).